The chain runs to 390 residues: S-adenosylmethionine synthase 3 (390 aa).

Residue glutamate 9 participates in Mg(2+) binding. Histidine 15 is a binding site for ATP. Residue glutamate 43 participates in K(+) binding. L-methionine contacts are provided by glutamate 56 and glutamine 99. Residues 167–169 (DGK), 235–238 (SGRF), aspartate 246, 252–253 (RK), alanine 269, lysine 273, and lysine 277 each bind ATP. Aspartate 246 is a binding site for L-methionine. Lysine 277 is a binding site for L-methionine.

The protein belongs to the AdoMet synthase family. As to quaternary structure, homotetramer. Interacts with GRF3. Mn(2+) is required as a cofactor. Requires Mg(2+) as cofactor. The cofactor is Co(2+). It depends on K(+) as a cofactor.

The protein resides in the cytoplasm. It catalyses the reaction L-methionine + ATP + H2O = S-adenosyl-L-methionine + phosphate + diphosphate. The protein operates within amino-acid biosynthesis; S-adenosyl-L-methionine biosynthesis; S-adenosyl-L-methionine from L-methionine: step 1/1. Inhibited by 5,5'-dithiobis-2-nitrobenzoic acid (DTNB) and N-ethylmaleimide (NEM) (in vitro). Functionally, catalyzes the formation of S-adenosylmethionine from methionine and ATP. The reaction comprises two steps that are both catalyzed by the same enzyme: formation of S-adenosylmethionine (AdoMet) and triphosphate, and subsequent hydrolysis of the triphosphate. Involved in the biosynthesis of lignin. This Arabidopsis thaliana (Mouse-ear cress) protein is S-adenosylmethionine synthase 3 (METK3).